We begin with the raw amino-acid sequence, 249 residues long: Sugar fermentation stimulation protein homolog (249 aa).

This sequence belongs to the SfsA family.

The protein is Sugar fermentation stimulation protein homolog of Rhizobium rhizogenes (strain K84 / ATCC BAA-868) (Agrobacterium radiobacter).